The primary structure comprises 230 residues: Ureidoacrylate amidohydrolase RutB (230 aa).

Aspartate 24 serves as the catalytic Proton acceptor. The active site involves lysine 133. The Nucleophile role is filled by cysteine 166.

The protein belongs to the isochorismatase family. RutB subfamily.

It carries out the reaction (Z)-3-ureidoacrylate + H2O + H(+) = (Z)-3-aminoacrylate + NH4(+) + CO2. The enzyme catalyses (Z)-3-ureidoacrylate + H2O = (Z)-3-aminoacrylate + carbamate + H(+). It catalyses the reaction (Z)-2-methylureidoacrylate + H2O + H(+) = (Z)-2-methylaminoacrylate + NH4(+) + CO2. Hydrolyzes ureidoacrylate to form aminoacrylate and carbamate. The carbamate hydrolyzes spontaneously, thereby releasing one of the nitrogen atoms of the pyrimidine ring as ammonia and one of its carbon atoms as CO2. This chain is Ureidoacrylate amidohydrolase RutB, found in Escherichia coli O150:H5 (strain SE15).